Consider the following 446-residue polypeptide: Ribosomal protein uS12 methylthiotransferase RimO (446 aa).

An MTTase N-terminal domain is found at 7 to 118; it reads PKIAFAHLGC…IVEVIERVER (112 aa). [4Fe-4S] cluster is bound by residues C16, C52, C81, C156, C160, and C163. One can recognise a Radical SAM core domain in the interval 142–371; sequence TTPAPVAYLR…MELQQPIAQR (230 aa). The region spanning 374-440 is the TRAM domain; sequence AAEVGKIVPV…IYDLYGIIPA (67 aa).

It belongs to the methylthiotransferase family. RimO subfamily. Requires [4Fe-4S] cluster as cofactor.

The protein resides in the cytoplasm. It catalyses the reaction L-aspartate(89)-[ribosomal protein uS12]-hydrogen + (sulfur carrier)-SH + AH2 + 2 S-adenosyl-L-methionine = 3-methylsulfanyl-L-aspartate(89)-[ribosomal protein uS12]-hydrogen + (sulfur carrier)-H + 5'-deoxyadenosine + L-methionine + A + S-adenosyl-L-homocysteine + 2 H(+). In terms of biological role, catalyzes the methylthiolation of an aspartic acid residue of ribosomal protein uS12. The chain is Ribosomal protein uS12 methylthiotransferase RimO from Thermosynechococcus vestitus (strain NIES-2133 / IAM M-273 / BP-1).